The following is a 286-amino-acid chain: UDP-3-O-acyl-N-acetylglucosamine deacetylase (286 aa).

Zn(2+) contacts are provided by His79, His237, and Asp241. His264 acts as the Proton donor in catalysis.

This sequence belongs to the LpxC family. Zn(2+) serves as cofactor.

The enzyme catalyses a UDP-3-O-[(3R)-3-hydroxyacyl]-N-acetyl-alpha-D-glucosamine + H2O = a UDP-3-O-[(3R)-3-hydroxyacyl]-alpha-D-glucosamine + acetate. It participates in glycolipid biosynthesis; lipid IV(A) biosynthesis; lipid IV(A) from (3R)-3-hydroxytetradecanoyl-[acyl-carrier-protein] and UDP-N-acetyl-alpha-D-glucosamine: step 2/6. Functionally, catalyzes the hydrolysis of UDP-3-O-myristoyl-N-acetylglucosamine to form UDP-3-O-myristoylglucosamine and acetate, the committed step in lipid A biosynthesis. The protein is UDP-3-O-acyl-N-acetylglucosamine deacetylase of Brucella abortus (strain 2308).